The sequence spans 482 residues: Glutamate--tRNA ligase (482 aa).

The 'HIGH' region signature appears at 10-20 (PSPTGFLHIGN). The 'KMSKS' region motif lies at 253 to 257 (KLSKR). K256 is an ATP binding site.

This sequence belongs to the class-I aminoacyl-tRNA synthetase family. Glutamate--tRNA ligase type 1 subfamily. In terms of assembly, monomer.

It localises to the cytoplasm. It carries out the reaction tRNA(Glu) + L-glutamate + ATP = L-glutamyl-tRNA(Glu) + AMP + diphosphate. Catalyzes the attachment of glutamate to tRNA(Glu) in a two-step reaction: glutamate is first activated by ATP to form Glu-AMP and then transferred to the acceptor end of tRNA(Glu). The protein is Glutamate--tRNA ligase of Mesoplasma florum (strain ATCC 33453 / NBRC 100688 / NCTC 11704 / L1) (Acholeplasma florum).